The chain runs to 283 residues: uncharacterized protein (283 aa).

The signal sequence occupies residues 1–25; it reads MNKKRLLFRTPLDALFLLFGTALSA. C26 is lipidated: N-palmitoyl cysteine. Residue C26 is the site of S-diacylglycerol cysteine attachment.

The protein belongs to the MG439/MG440 family.

Its subcellular location is the cell membrane. This is an uncharacterized protein from Mycoplasma pneumoniae (strain ATCC 29342 / M129 / Subtype 1) (Mycoplasmoides pneumoniae).